Here is a 942-residue protein sequence, read N- to C-terminus: Leucine--tRNA ligase (942 aa).

The 'HIGH' region motif lies at 41-51 (PYLNGVLHAGH). A 'KMSKS' region motif is present at residues 633 to 637 (KLSKS). K636 contacts ATP.

The protein belongs to the class-I aminoacyl-tRNA synthetase family.

It localises to the cytoplasm. The enzyme catalyses tRNA(Leu) + L-leucine + ATP = L-leucyl-tRNA(Leu) + AMP + diphosphate. This chain is Leucine--tRNA ligase, found in Methanocaldococcus jannaschii (strain ATCC 43067 / DSM 2661 / JAL-1 / JCM 10045 / NBRC 100440) (Methanococcus jannaschii).